Here is a 235-residue protein sequence, read N- to C-terminus: NAD(P)H-hydrate epimerase (235 aa).

A YjeF N-terminal domain is found at 18-221; it reads AAKIDEQLFS…GLVEEHGLQM (204 aa). Position 65–69 (65–69) interacts with (6S)-NADPHX; that stretch reads NNGGD. Residues Asn66 and Asp127 each contribute to the K(+) site. (6S)-NADPHX-binding positions include 131–137 and Asp160; that span reads GFSFKPP. Ser163 lines the K(+) pocket.

The protein belongs to the NnrE/AIBP family. K(+) is required as a cofactor.

It catalyses the reaction (6R)-NADHX = (6S)-NADHX. The catalysed reaction is (6R)-NADPHX = (6S)-NADPHX. In terms of biological role, catalyzes the epimerization of the S- and R-forms of NAD(P)HX, a damaged form of NAD(P)H that is a result of enzymatic or heat-dependent hydration. This is a prerequisite for the S-specific NAD(P)H-hydrate dehydratase to allow the repair of both epimers of NAD(P)HX. The sequence is that of NAD(P)H-hydrate epimerase from Caenorhabditis briggsae.